Reading from the N-terminus, the 233-residue chain is Peroxisomal membrane protein 11-5 (233 aa).

Residues 1 to 92 (MSSLESARAD…PLILLGKSKN (92 aa)) lie on the Cytoplasmic side of the membrane. The chain crosses the membrane as a helical span at residues 93-113 (ALLSTFLFLDQIVWAGRTGIY). The Lumenal portion of the chain corresponds to 114–206 (KNKERAEFLS…LLQLAPKKVT (93 aa)). The chain crosses the membrane as a helical span at residues 207-226 (PRVTGAFGFASSLIACYQLL).

The protein belongs to the peroxin-11 family. In terms of tissue distribution, expressed in seedlings, roots, shoots, leaf sheaths, flag leaf, panicles, spikelets, and endosperm.

It localises to the peroxisome membrane. Involved in peroxisomal proliferation. The sequence is that of Peroxisomal membrane protein 11-5 (PEX11-5) from Oryza sativa subsp. japonica (Rice).